We begin with the raw amino-acid sequence, 56 residues long: Large ribosomal subunit protein bL32 (56 aa).

Residues 1–23 (MAVQQNKSTRSKRGMRRSHNALP) are disordered. A compositionally biased stretch (basic residues) spans 9–19 (TRSKRGMRRSH).

This sequence belongs to the bacterial ribosomal protein bL32 family.

The protein is Large ribosomal subunit protein bL32 of Blochmanniella floridana.